The sequence spans 137 residues: Putative pre-16S rRNA nuclease (137 aa).

Belongs to the YqgF nuclease family.

It localises to the cytoplasm. Functionally, could be a nuclease involved in processing of the 5'-end of pre-16S rRNA. The polypeptide is Putative pre-16S rRNA nuclease (Buchnera aphidicola subsp. Schizaphis graminum (strain Sg)).